Consider the following 189-residue polypeptide: GMP synthase [glutamine-hydrolyzing] subunit A (189 aa).

Residues 1 to 189 (MIVILNNGGQ…CKVCGFKFNE (189 aa)) enclose the Glutamine amidotransferase type-1 domain. C76 functions as the Nucleophile in the catalytic mechanism. Catalysis depends on residues H163 and E165.

Heterodimer composed of a glutamine amidotransferase subunit (A) and a GMP-binding subunit (B).

It carries out the reaction XMP + L-glutamine + ATP + H2O = GMP + L-glutamate + AMP + diphosphate + 2 H(+). The protein operates within purine metabolism; GMP biosynthesis; GMP from XMP (L-Gln route): step 1/1. In terms of biological role, catalyzes the synthesis of GMP from XMP. The protein is GMP synthase [glutamine-hydrolyzing] subunit A of Methanococcus vannielii (strain ATCC 35089 / DSM 1224 / JCM 13029 / OCM 148 / SB).